Reading from the N-terminus, the 1304-residue chain is Histone-lysine N-methyltransferase met-2 (1304 aa).

Polar residues predominate over residues 1–16 (MDQQEPSNNVDTSSIL). A disordered region spans residues 1–31 (MDQQEPSNNVDTSSILSDDGMETQEQSSFVT). The stretch at 97–129 (NESEQEAVAAQRRVDAEKTAKDEAELKQQEEAE) forms a coiled coil. The region spanning 834 to 909 (FHRNSPIHTP…FSFDARIDTA (76 aa)) is the MBD domain. The Pre-SET domain occupies 971–1049 (SGCSCDGDCS…SCYNRVVQNN (79 aa)). Residues C973, C975, C979, C985, C987, C1030, C1034, C1036, and C1041 each coordinate Zn(2+). Residues 1052–1277 (YPMHIFKTAQ…AGDELTWDYQ (226 aa)) enclose the SET domain. S-adenosyl-L-methionine contacts are provided by residues 1062–1064 (SGW), D1098, and Y1100. Basic and acidic residues predominate over residues 1113–1122 (EKGREDHETD). A disordered region spans residues 1113–1201 (EKGREDHETD…DSMEKDNIES (89 aa)). The segment covering 1128–1144 (DESDYDDEEGSDGDSGD) has biased composition (acidic residues). Over residues 1152 to 1165 (KRQDSSESGEETKR) the composition is skewed to basic and acidic residues. Over residues 1166–1178 (LTRQKRKQSKKSG) the composition is skewed to basic residues. Positions 1182 to 1201 (SVEKDDTTPRDSMEKDNIES) are enriched in basic and acidic residues. S-adenosyl-L-methionine is bound by residues R1231 and 1234-1235 (NH). 4 residues coordinate Zn(2+): C1237, C1290, C1292, and C1297. Residues 1286-1302 (TQLTCHCGAENCTGRLL) enclose the Post-SET domain.

This sequence belongs to the class V-like SAM-binding methyltransferase superfamily.

It is found in the nucleus. The protein resides in the chromosome. The protein localises to the cytoplasm. The enzyme catalyses N(6)-methyl-L-lysyl(9)-[histone H3] + S-adenosyl-L-methionine = N(6),N(6)-dimethyl-L-lysyl(9)-[histone H3] + S-adenosyl-L-homocysteine + H(+). The catalysed reaction is L-lysyl(9)-[histone H3] + S-adenosyl-L-methionine = N(6)-methyl-L-lysyl(9)-[histone H3] + S-adenosyl-L-homocysteine + H(+). Functionally, histone methyltransferase which is required for the mono- and dimethylation of 'Lys-9' of histone H3. This increases the efficiency of set-25-mediated trimethylation of histone H3 'Lys-9'. Involved in the transcriptional repression of lin-3 which is required for the negative regulation of vulval cell fate specification during postembryonic development. Has a role in blocking checkpoint signaling and mediating the transcriptional silencing of meiotic sex chromosome inactivation; a mechanism which enables checkpoint proteins to distinguish between the partnerless male X chromosome and asynapsed chromosomes thereby shielding the lone X from inappropriate activation of an apoptotic program. Operates redundantly with set-25 to position chromatin at the nuclear periphery. Required for small-RNA-induced H3K9 methylation. Together with set-25, protects and stabilizes repeat-rich genomic regions by suppressing transcription-induced replication stress through methylation of H3K9. Together with spr-5, required for transgenerational fertility. This Caenorhabditis elegans protein is Histone-lysine N-methyltransferase met-2 (met-2).